A 207-amino-acid chain; its full sequence is Ras-related protein Rab7 (207 aa).

Residues G15–T22, S34–T40, D63–Q67, N125–D128, and A156–K157 contribute to the GTP site. The Effector region motif lies at Y37 to F45. Residues C205 and C207 are each lipidated (S-geranylgeranyl cysteine).

Belongs to the small GTPase superfamily. Rab family. In terms of tissue distribution, expressed in eye (at protein level).

The protein localises to the early endosome membrane. It is found in the late endosome membrane. Its subcellular location is the lysosome membrane. It localises to the cytoplasmic vesicle. The protein resides in the autophagosome membrane. The protein localises to the autolysosome membrane. It is found in the presynapse. Its subcellular location is the perikaryon. The enzyme catalyses GTP + H2O = GDP + phosphate + H(+). Small GTPase which cycles between active GTP-bound and inactive GDP-bound states. In its active state, binds to a variety of effector proteins playing a key role in the regulation of endo-lysosomal trafficking. Involved in microtubule minus and plus end-directed endosomal migration and positioning, and endosome-lysosome transport through different protein-protein interaction cascades. Governs early-to-late endosomal to lysosomal maturation. Controls endocytic cargo sorting towards the late endosome facilitating its eventual endolysosomal-mediated degradation. Together with Rab2 involved in promoting fusion of autophagosomes and endosomes with lysosomes probably through recruitment of the HOPS tethering complex. Involved in biosynthetic transport to lysosomes. Involved in establishing morphogen concentration gradients, for example of the TGF-beta homolog dpp/decapentaplegic, during pattern formation and organogenesis. Together with the Mon1-Ccz1 complex, required for autolysosome formation in fat cells and autophagic degradation during starvation-induced basal and developmental autophagy. Together with Mon1, regulates levels of postsynaptic glutamate receptor GluRIIA in the neuromuscular junction (NMJ) presynapse. Required for autophagocytosis-dependent remodeling of myofibrils and transverse-tubules (T-tubules) during metamorphosis. Involved in intracellular trafficking of the carbohydrate transporter Tret1 in glial cells of the blood brain barrier, influencing its subcellular localization and protein levels. The polypeptide is Ras-related protein Rab7 (Drosophila melanogaster (Fruit fly)).